We begin with the raw amino-acid sequence, 519 residues long: MAEEKLSARTQLPVSAESQKPVLKKAPEFPILEKQNWLIHLYYIQKDYEACKAVIKEQLQETHGLCEYAIYVQALIFRLEGNIQESLRLFQMCAFLSPQCADNLKQVARSLFLLGKHKAAIEVYNEAAKLNQKDWEICHNLGVCYIYLKQFDKAQDQLHNALHLNRHDLTYIMLGKIFLLKGDLDKAIEIYKKAVEFSPENTELLTTLGLLYLQLGIYQKAFEHLGNTLTYDPTNYKAILAAGSMMQTHGDFDVALTKYKVVACAVIESPPLWNNIGMCFFGKKKYVAAISCLKRANYLAPLDWKILYNLGLVHLTMQQYASAFHFLSAAINFQPKMGELYMLLAVALTNLEDSENAKRAYEEAVRLDKCNPLVNLNYAVLLYNQGEKRDALAQYQEMEKKVNLLKYSSSLEFDPEMVEVAQKLGAALQVGEALVWTKPVKDPKSKHQTASTSKAAGFQQPLGSNQALGQAMSSAATCRKLSSGAGGTSQLTKPPSLPLEPEPTVEAQPTEASAQTREK.

Residues methionine 1 to cysteine 66 are required for localization to centrosomes. TPR repeat units lie at residues glutamate 67 to cysteine 100, alanine 101 to aspartate 134, tryptophan 135 to aspartate 168, leucine 169 to asparagine 201, glutamate 203 to asparagine 235, lysine 237 to serine 269, proline 270 to aspartate 303, tryptophan 304 to methionine 337, glutamate 339 to asparagine 371, and alanine 379 to methionine 417. The segment at alanine 101–methionine 337 is interaction with PCM1. The segment at glycine 338–lysine 519 is required for localization to centrosomes. A disordered region spans residues proline 439 to lysine 519. Polar residues-rich tracts occupy residues proline 461–alanine 476 and threonine 510–lysine 519.

It belongs to the BBS4 family. As to quaternary structure, part of BBSome complex, that contains BBS1, BBS2, BBS4, BBS5, BBS7, BBS8, BBS9 and BBIP10. Interacts with PCM1 and DCTN1. Interacts with CCDC28B. Interacts with ALDOB and C2CD3. Interacts with PKD1. Interacts with CEP290. Interacts with DLEC1.

Its subcellular location is the cytoplasm. It localises to the cytoskeleton. The protein localises to the microtubule organizing center. It is found in the centrosome. The protein resides in the cell projection. Its subcellular location is the cilium membrane. It localises to the centriolar satellite. The protein localises to the cilium. It is found in the flagellum. Its function is as follows. May be required for the dynein-mediated transport of pericentriolar proteins to the centrosome. Required for microtubule anchoring at the centrosome but not for microtubule nucleation. The BBSome complex is required for ciliogenesis but is dispensable for centriolar satellite function. This ciliogenic function is mediated in part by the Rab8 GDP/GTP exchange factor, which localizes to the basal body and contacts the BBSome. Rab8(GTP) enters the primary cilium and promotes extension of the ciliary membrane. Firstly the BBSome associates with the ciliary membrane and binds to RAB3IP/Rabin8, the guanosyl exchange factor (GEF) for Rab8 and then the Rab8-GTP localizes to the cilium and promotes docking and fusion of carrier vesicles to the base of the ciliary membrane. In Bos taurus (Bovine), this protein is BBSome complex member BBS4 (BBS4).